A 472-amino-acid chain; its full sequence is uncharacterized protein (472 aa).

2 stretches are compositionally biased toward low complexity: residues 1–21 (MAFS…SRPG) and 63–74 (ASSLPAPASSSP). A disordered region spans residues 1-74 (MAFSSSSLRR…SLPAPASSSP (74 aa)).

This is an uncharacterized protein from Equus caballus (Horse).